The following is a 318-amino-acid chain: MSDGGAGAKGAGFGMPRVGMGTAVQGPRPEPIRRAVLKAIEAGYRHFDTAAHYETEAPIGEAAAEAVRSGAIASRADLFITSKLWCSDAHRDRVLPALRQTLWNLQMEYVDLYLVHWPVSMKPGRYKAPFTADDFVPFDMRAVWEAMEECHRLGLAKAIGVCNFSCKKLDTLLSFATIPPAVNQVEVNPVWQQRKLRELCREKGVQICAYSPLGASGTHWGSDSVMASAVLRDIAQSKGKTVAQVCLRWVYEQGDCLIVKSFDEARMRENLDIVGWELTEEERQRIAGIPQRKINRALRFVSDHGPYKSLDDLWDGEI.

An NADP(+)-binding site is contributed by D48. Y53 acts as the Proton donor in catalysis. H116 lines the substrate pocket. NADP(+) contacts are provided by residues 162 to 163, Q184, 262 to 270, and 277 to 285; these read CN, FDEARMREN, and ELTEEERQR.

The protein belongs to the aldo/keto reductase family. In terms of tissue distribution, confined to cells participating in long distance transport (e.g. in the parts of pericycle cells adjacent to the protoxylem and metaxylem) in roots and to vascular bundles in shoots.

The enzyme catalyses 2'-deoxymugineate + NAD(+) = 3''-deamino-3''-oxonicotianamine + NADH + H(+). It catalyses the reaction 2'-deoxymugineate + NADP(+) = 3''-deamino-3''-oxonicotianamine + NADPH + H(+). It participates in siderophore biosynthesis. Functionally, catalyzes the reduction of a 3''-keto intermediate during the biosynthesis of 2'-deoxymugineic acid (DMA) from L-Met. Involved in the formation of phytosiderophores (MAs) belonging to the mugineic acid family and required to acquire iron. The protein is Deoxymugineic acid synthase 1 of Oryza sativa subsp. japonica (Rice).